Consider the following 512-residue polypeptide: MHPLWAFLLGLSLTNGLSANCPGRCSCDSMQSVQCYRLMELPSGIPSTTKRLYISHSRIQHLQLSNFTGLLALEDFILLASGTESIENDTFKTLSTLKTLELWKNKLRQVPSALPANLEVLKLNDNAICALRGSEFEGLKNLKVLELKNNLISSLSPSMLSPLASLQSLMVDGNNIESVVGPLSLPHLKYMSMENNQLHLIPGNVFTSLQNLQFLSFSGNFLTKIPINLPKSLLSLKMERNQLKVVRFRDMKHLENLSHLYLSENFLSSIDGAQQLTNLTTLEVSQNQLQMLPPRLPSRLQKLDCSSNFIQRVTAPEFQDLRDLKHLFLDNNVVSLFEAGALQRCSQLSNLALEQNLLLSIPLRLPKTLARLDLKGNAIQDMAERELRDLKQLQVLNLRNNRISALDFKALEGLPRLRHLYLDGNPWNCTCSLLRAREVLKAKGTDVKGGQCAAPAERQGESWMSSKKILRQCEHHLQQSEKSKETKKKPKPEDSSSIRLNMDDDDDDYEID.

The N-terminal stretch at 1–19 (MHPLWAFLLGLSLTNGLSA) is a signal peptide. In terms of domain architecture, LRRNT spans 20–44 (NCPGRCSCDSMQSVQCYRLMELPSG). LRR repeat units lie at residues 45-69 (IPST…NFTG), 71-93 (LALE…TFKT), 94-117 (LSTL…LPAN), 119-138 (EVLK…EFEG), 139-162 (LKNL…MLSP), 164-185 (ASLQ…PLSL), 186-208 (PHLK…VFTS), 210-232 (QNLQ…LPKS), 234-253 (LSLK…DMKH), 254-276 (LENL…AQQL), 277-299 (TNLT…LPSR), 301-320 (QKLD…EFQD), 321-344 (LRDL…ALQR), 346-371 (SQLS…TLAR), 373-389 (DLKG…ELRD), 390-413 (LKQL…ALEG), and 415-442 (PRLR…VLKA). N66 is a glycosylation site (N-linked (GlcNAc...) asparagine). Positions 474–484 (EHHLQQSEKSK) are enriched in basic and acidic residues. The tract at residues 474-512 (EHHLQQSEKSKETKKKPKPEDSSSIRLNMDDDDDDYEID) is disordered. The segment covering 503–512 (DDDDDDYEID) has biased composition (acidic residues).

This sequence belongs to the small leucine-rich proteoglycan (SLRP) family. In terms of processing, N-glycosylated. Expressed at highest levels in the kidney, where it is primarily detected in the epithelial cells of distal tubules and collecting ducts, and more weakly in proximal epithelial cells. Expressed at lower levels in heart and lung (at protein level). Detected in skeletal muscle.

Its subcellular location is the secreted. May inhibit TGF-beta signaling. The polypeptide is Nephrocan (Mus musculus (Mouse)).